A 372-amino-acid chain; its full sequence is GTPase Obg (372 aa).

The Obg domain occupies Met-1 to Leu-159. The tract at residues Leu-128–Gly-147 is disordered. An OBG-type G domain is found at Ala-160–Ala-334. GTP is bound by residues Gly-166 to Ser-173, Phe-191 to Ala-195, Asp-213 to Gly-216, Asn-284 to Asp-287, and Ser-315 to Leu-317. Mg(2+) is bound by residues Ser-173 and Thr-193.

This sequence belongs to the TRAFAC class OBG-HflX-like GTPase superfamily. OBG GTPase family. In terms of assembly, monomer. Requires Mg(2+) as cofactor.

It is found in the cytoplasm. Its function is as follows. An essential GTPase which binds GTP, GDP and possibly (p)ppGpp with moderate affinity, with high nucleotide exchange rates and a fairly low GTP hydrolysis rate. Plays a role in control of the cell cycle, stress response, ribosome biogenesis and in those bacteria that undergo differentiation, in morphogenesis control. In Burkholderia thailandensis (strain ATCC 700388 / DSM 13276 / CCUG 48851 / CIP 106301 / E264), this protein is GTPase Obg.